Consider the following 730-residue polypeptide: Elongation factor 2 (730 aa).

The tr-type G domain occupies 19-260 (KFIRNIGIVA…MVVKHLPDPF (242 aa)). Residues 28-35 (AHIDHGKT), 94-98 (DTPGH), and 148-151 (NKVD) contribute to the GTP site. The residue at position 597 (His-597) is a Diphthamide.

Belongs to the TRAFAC class translation factor GTPase superfamily. Classic translation factor GTPase family. EF-G/EF-2 subfamily.

The protein localises to the cytoplasm. Catalyzes the GTP-dependent ribosomal translocation step during translation elongation. During this step, the ribosome changes from the pre-translocational (PRE) to the post-translocational (POST) state as the newly formed A-site-bound peptidyl-tRNA and P-site-bound deacylated tRNA move to the P and E sites, respectively. Catalyzes the coordinated movement of the two tRNA molecules, the mRNA and conformational changes in the ribosome. In Methanosphaerula palustris (strain ATCC BAA-1556 / DSM 19958 / E1-9c), this protein is Elongation factor 2.